The following is a 424-amino-acid chain: Double homeobox protein 4 (424 aa).

The span at 1–10 (MALPTPSDST) shows a compositional bias: polar residues. Disordered stretches follow at residues 1 to 24 (MALPTPSDSTLPAEARGRGRRRRL), 72 to 102 (SRQLRQHRRESRPWPGRRGPPEGRRKRTAVT), 218 to 362 (LQPS…LQEP), and 388 to 414 (QPLLETEAPGELEASEEAASLEAPLSE). 2 DNA-binding regions (homeobox) span residues 19–78 (GRRR…LRQH) and 94–153 (GRRK…PGQG). The span at 265-274 (KSREDRDPQR) shows a compositional bias: basic and acidic residues. Low complexity-rich tracts occupy residues 278–302 (PGPCAVAQPGPAQAGPQGQGVLAPP) and 319–329 (AGAAWEPQAGA). The required for interaction with EP300 and CREBBP, and for transcriptional activation of target genes stretch occupies residues 327 to 424 (AGAAPPPQPA…EEYRALLEEL (98 aa)). An important for transcriptional activation of target genes region spans residues 405-424 (AASLEAPLSEEEYRALLEEL).

Belongs to the paired homeobox family. As to quaternary structure, binds DNA as a monomer. Interacts (via C-terminus) with EP300 and CREBBP. Isoform 1: Does not seem to be expressed in normal muscle, but is detected in muscle of individuals with FSHD, and also in testis (at protein level). Isoform 1: Does not seem to be expressed in normal muscle, but in muscle of individuals with FSHD, where it may be toxic to cells. Isoform 2: Detected in skeletal muscle, fibroblasts and testis from healthy individuals.

The protein resides in the nucleus. The protein localises to the cytoplasm. Its function is as follows. Transcription factor that is selectively and transiently expressed in cleavage-stage embryos. Binds to double-stranded DNA elements with the consensus sequence 5'-TAATCTAATCA-3'. Binds to chromatin containing histone H3 acetylated at 'Lys-27' (H3K27ac) and promotes deacetylation of H3K27ac. In parallel, binds to chromatin that lacks histone H3 acetylation at 'Lys-27' (H3K27ac) and recruits EP300 and CREBBP to promote acetylation of histone H3 at 'Lys-27' at new sites. Involved in transcriptional regulation of numerous genes, primarily as transcriptional activator, but also mediates repression of a set of target genes. Promotes expression of ZSCAN4 and KDM4E, two proteins with essential roles during early embryogenesis. Promotes nuclear translocation of CTNNB1/beta-catenin and its subsequent activation of target genes. Heterologous expression in cultured embryonic stem cells mediates transcription of HERVL retrotransposons and transcripts derived from ACRO1 and HSATII satellite repeats. May activate expression of PITX1. May regulate microRNA (miRNA) expression. Inappropriate expression can inhibit myogenesis and promote apoptosis. Probably inactive as a transcriptional activator, due to the absence of the C-terminal region that is important for transcriptional activation. Can inhibit transcriptional activation mediated by isoform 1. Heterologous expression of isoform 2 has no deleterious effect on cell survival. This chain is Double homeobox protein 4, found in Homo sapiens (Human).